The sequence spans 261 residues: MMNQTYTAVLADDEPLLRHHLNKLLAELWPALEIVASAENGQIALQAIEQHQPDVVFLDIRMPKMDGIEVARRLLQQPKVPLVVFITAYDEYAVSAFETHAIDYLLKPLSSSRLASCCEKLQQQLRRNVAPSNDLAQLMSQFEQLTRTVKPQYQVWLKASKGEEIHLIAVNELLYVKAEDKYLSLYKVHGATTHEYLLRSSLKELLAQLDPNQFWQIHRSIVVNVGKIDKVTRDFGGKMWVHIDRLQLPVSRALQHLFKVS.

Residues 7-122 (TAVLADDEPL…RLASCCEKLQ (116 aa)) form the Response regulatory domain. 4-aspartylphosphate is present on D54. The region spanning 157-261 (LKASKGEEIH…RALQHLFKVS (105 aa)) is the HTH LytTR-type domain.

This is an uncharacterized protein from Vibrio cholerae serotype O1 (strain ATCC 39315 / El Tor Inaba N16961).